The primary structure comprises 105 residues: UPF0145 protein CPS_2458 (105 aa).

The protein belongs to the UPF0145 family.

This chain is UPF0145 protein CPS_2458, found in Colwellia psychrerythraea (strain 34H / ATCC BAA-681) (Vibrio psychroerythus).